A 278-amino-acid chain; its full sequence is Formyltetrahydrofolate deformylase (278 aa).

An ACT domain is found at 6 to 85; it reads ILLTDCPDDK…RLIGTQRKRI (80 aa). Aspartate 223 is an active-site residue.

It belongs to the PurU family.

It carries out the reaction (6R)-10-formyltetrahydrofolate + H2O = (6S)-5,6,7,8-tetrahydrofolate + formate + H(+). Its pathway is purine metabolism; IMP biosynthesis via de novo pathway; formate from 10-formyl-5,6,7,8-tetrahydrofolate: step 1/1. Catalyzes the hydrolysis of 10-formyltetrahydrofolate (formyl-FH4) to formate and tetrahydrofolate (FH4). The polypeptide is Formyltetrahydrofolate deformylase (Haemophilus influenzae (strain ATCC 51907 / DSM 11121 / KW20 / Rd)).